The chain runs to 134 residues: Profilin (134 aa).

The protein belongs to the profilin family. Occurs in many kinds of cells as a complex with monomeric actin in a 1:1 ratio.

Its subcellular location is the cytoplasm. The protein resides in the cytoskeleton. Its function is as follows. Binds to actin and affects the structure of the cytoskeleton. At high concentrations, profilin prevents the polymerization of actin, whereas it enhances it at low concentrations. By binding to PIP2, it inhibits the formation of IP3 and DG. This Brassica napus (Rape) protein is Profilin.